The primary structure comprises 590 residues: Guanylate-binding protein 1 (590 aa).

The interval 1–309 is GTPase domain (Globular); that stretch reads MASEIHMTGP…NAISSGDLPC (309 aa). Positions 35-276 constitute a GB1/RHD3-type G domain; it reads TQPVVVVAIV…FCSYIFSNSK (242 aa). Residues 45-52, 67-69, and 97-101 contribute to the GTP site; these read GLYRTGKS, LGS, and DTEGL. Phosphoserine is present on Ser156. Cys587 is subject to Cysteine methyl ester. A lipid anchor (S-farnesyl cysteine) is attached at Cys587. Residue Thr588 is modified to Phosphothreonine. The propeptide at 588–590 is removed in mature form; sequence TIS.

The protein belongs to the TRAFAC class dynamin-like GTPase superfamily. GB1/RHD3 GTPase family. GB1 subfamily. As to quaternary structure, homodimer; homodimerization occurs upon GTP-binding and is required for the second hydrolysis step from GDP to GMP. Undergoes conformational changes and oligomerization upon GTP-binding and hydrolysis. Heterodimer with other family members, including GBP2, GBP3, GBP4 and GBP5. Dimerization regulates subcellular location to membranous structures. Interacts with SQSTM1. Interacts (when phosphorylated) with 14-3-3 protein sigma (SFN); leading to GBP1 retention in the cytosol and inactivation. Isoprenylation is required for proper subcellular location. Post-translationally, phosphorylated at Ser-156 by PIM1 in absence of infection, inhibits GBP1: phosphorylation promotes interaction with 14-3-3 protein sigma (SFN), leading to GBP1 retention in the cytosol. Dephosphorylated in response to infection, liberating GBP1.

It is found in the cytoplasmic vesicle membrane. The protein resides in the golgi apparatus membrane. The protein localises to the cell membrane. It localises to the cytoplasm. Its subcellular location is the cytosol. It is found in the secreted. The enzyme catalyses GTP + H2O = GDP + phosphate + H(+). It carries out the reaction GDP + H2O = GMP + phosphate + H(+). Its function is as follows. Interferon (IFN)-inducible GTPase that plays important roles in innate immunity against a diverse range of bacterial, viral and protozoan pathogens. Hydrolyzes GTP to GMP in two consecutive cleavage reactions: GTP is first hydrolyzed to GDP and then to GMP in a processive manner. Following infection, recruited to the pathogen-containing vacuoles or vacuole-escaped bacteria and promotes both inflammasome assembly and autophagy. Acts as a positive regulator of inflammasome assembly by facilitating the detection of inflammasome ligands from pathogens. Involved in the lysis of pathogen-containing vacuoles, releasing pathogens into the cytosol. Following pathogen release in the cytosol, forms a protein coat in a GTPase-dependent manner that encapsulates pathogens and promotes the detection of ligands by pattern recognition receptors. Plays a key role in inflammasome assembly in response to infection by Gram-negative bacteria: following pathogen release in the cytosol, forms a protein coat that encapsulates Gram-negative bacteria and directly binds to lipopolysaccharide (LPS), disrupting the O-antigen barrier and unmasking lipid A that is that detected by the non-canonical inflammasome effector CASP4/CASP11. Also promotes recruitment of proteins that mediate bacterial cytolysis, leading to release double-stranded DNA (dsDNA) that activates the AIM2 inflammasome. Involved in autophagy by regulating bacteriolytic peptide generation via its interaction with ubiquitin-binding protein SQSTM1, which delivers monoubiquitinated proteins to autolysosomes for the generation of bacteriolytic peptides. Confers protection to several pathogens, including the bacterial pathogens L.monocytogenes and M.bovis BCG as well as the protozoan pathogen T.gondii. Exhibits antiviral activity against influenza virus. The protein is Guanylate-binding protein 1 (GBP1) of Chlorocebus aethiops (Green monkey).